Here is a 250-residue protein sequence, read N- to C-terminus: Small ribosomal subunit protein uS3 (250 aa).

Positions 39–111 (IRQLINNFSK…DINLNILEVK (73 aa)) constitute a KH type-2 domain.

It belongs to the universal ribosomal protein uS3 family. As to quaternary structure, part of the 30S ribosomal subunit. Forms a tight complex with proteins S10 and S14.

Functionally, binds the lower part of the 30S subunit head. Binds mRNA in the 70S ribosome, positioning it for translation. This chain is Small ribosomal subunit protein uS3, found in Phytoplasma australiense.